The sequence spans 390 residues: Putative nickel insertion protein (390 aa).

It belongs to the LarC family.

The protein is Putative nickel insertion protein of Myxococcus xanthus (strain DK1622).